The sequence spans 452 residues: Pup--protein ligase (452 aa).

Mg(2+) is bound at residue Glu-9. Arg-53 is a binding site for ATP. Mg(2+) is bound at residue Tyr-55. Asp-57 acts as the Proton acceptor in catalysis. Glu-63 provides a ligand contact to Mg(2+). Positions 66 and 419 each coordinate ATP.

This sequence belongs to the Pup ligase/Pup deamidase family. Pup-conjugating enzyme subfamily.

It catalyses the reaction ATP + [prokaryotic ubiquitin-like protein]-L-glutamate + [protein]-L-lysine = ADP + phosphate + N(6)-([prokaryotic ubiquitin-like protein]-gamma-L-glutamyl)-[protein]-L-lysine.. It participates in protein degradation; proteasomal Pup-dependent pathway. Its pathway is protein modification; protein pupylation. Its function is as follows. Catalyzes the covalent attachment of the prokaryotic ubiquitin-like protein modifier Pup to the proteasomal substrate proteins, thereby targeting them for proteasomal degradation. This tagging system is termed pupylation. The ligation reaction involves the side-chain carboxylate of the C-terminal glutamate of Pup and the side-chain amino group of a substrate lysine. The chain is Pup--protein ligase from Saccharomonospora viridis (strain ATCC 15386 / DSM 43017 / JCM 3036 / CCUG 5913 / NBRC 12207 / NCIMB 9602 / P101) (Thermoactinomyces viridis).